The chain runs to 397 residues: Putative teichuronic acid biosynthesis glycosyltransferase TuaH (397 aa).

Belongs to the glycosyltransferase group 1 family.

It participates in cell wall biogenesis; teichuronic acid biosynthesis. This Bacillus subtilis (strain 168) protein is Putative teichuronic acid biosynthesis glycosyltransferase TuaH (tuaH).